Reading from the N-terminus, the 289-residue chain is Bis(5'-nucleosyl)-tetraphosphatase, symmetrical (289 aa).

Belongs to the Ap4A hydrolase family.

The catalysed reaction is P(1),P(4)-bis(5'-adenosyl) tetraphosphate + H2O = 2 ADP + 2 H(+). Its function is as follows. Hydrolyzes diadenosine 5',5'''-P1,P4-tetraphosphate to yield ADP. The polypeptide is Bis(5'-nucleosyl)-tetraphosphatase, symmetrical (Yersinia pseudotuberculosis serotype IB (strain PB1/+)).